Here is a 288-residue protein sequence, read N- to C-terminus: Disulfide-bond oxidoreductase YghU (288 aa).

Residues Asn26, 52–54 (TPN), Gln87, Ile101, 117–118 (ES), Gln151, and Arg178 contribute to the glutathione site. In terms of domain architecture, GST N-terminal spans 46–133 (QLYSLGTPNG…YLAEKFGYFL (88 aa)). A GST C-terminal domain is found at 139-265 (KRTETMNWLF…RIVNRTNGPL (127 aa)). The interval 260 to 288 (RTNGPLNEQLHERHDASDFETNTEDKRQG) is disordered. The span at 268–288 (QLHERHDASDFETNTEDKRQG) shows a compositional bias: basic and acidic residues.

Belongs to the GST superfamily. Nu-class GSH transferase family. Homodimer.

Functionally, exhibits a robust glutathione (GSH)-dependent disulfide-bond reductase activity toward the model substrate, 2-hydroxyethyl disulfide; the actual physiological substrates are not known. Also displays a modest GSH-dependent peroxidase activity toward several organic hydroperoxides, such as cumene hydroperoxide and linoleic acid 13(S)-hydroperoxide, but does not reduce H(2)O(2) or tert-butyl hydroperoxide at appreciable rates. Exhibits little or no GSH transferase activity with most typical electrophilic substrates, and has no detectable transferase activity toward 1-chloro-2,4-dinitrobenzene (CDNB) with glutathionylspermidine (GspSH) as the nucleophilic substrate. The chain is Disulfide-bond oxidoreductase YghU (yghU) from Escherichia coli (strain K12).